The chain runs to 390 residues: GTPase Obg (390 aa).

In terms of domain architecture, Obg spans methionine 1–leucine 159. Residues asparagine 127–glycine 147 are disordered. The span at arginine 129–threonine 145 shows a compositional bias: polar residues. The OBG-type G domain occupies alanine 160–isoleucine 333. GTP is bound by residues glycine 166 to serine 173, phenylalanine 191 to valine 195, aspartate 213 to glycine 216, asparagine 283 to aspartate 286, and serine 314 to alanine 316. Residues serine 173 and threonine 193 each coordinate Mg(2+).

The protein belongs to the TRAFAC class OBG-HflX-like GTPase superfamily. OBG GTPase family. As to quaternary structure, monomer. Requires Mg(2+) as cofactor.

Its subcellular location is the cytoplasm. An essential GTPase which binds GTP, GDP and possibly (p)ppGpp with moderate affinity, with high nucleotide exchange rates and a fairly low GTP hydrolysis rate. Plays a role in control of the cell cycle, stress response, ribosome biogenesis and in those bacteria that undergo differentiation, in morphogenesis control. This chain is GTPase Obg, found in Escherichia coli (strain K12 / DH10B).